Reading from the N-terminus, the 90-residue chain is Small ribosomal subunit protein bS18 (90 aa).

The protein belongs to the bacterial ribosomal protein bS18 family. In terms of assembly, part of the 30S ribosomal subunit. Forms a tight heterodimer with protein bS6.

Binds as a heterodimer with protein bS6 to the central domain of the 16S rRNA, where it helps stabilize the platform of the 30S subunit. This chain is Small ribosomal subunit protein bS18, found in Bacteroides thetaiotaomicron (strain ATCC 29148 / DSM 2079 / JCM 5827 / CCUG 10774 / NCTC 10582 / VPI-5482 / E50).